We begin with the raw amino-acid sequence, 233 residues long: Bcl-2-like protein 1 (233 aa).

Positions 4–24 match the BH4 motif; it reads SNRELVVDFLSYKLSQKGYSW. The segment at 27-73 is disordered; that stretch reads FSDVEENRTEAPEETEPERETPSAINGNPSWHLADSPAVNGATGHSS. S49 is modified (phosphoserine; by PLK3). At S62 the chain carries Phosphoserine; by CDK1. Positions 86–100 match the BH3 motif; the sequence is VKQALREAGDEFELR. The short motif at 129–148 is the BH1 element; sequence ELFRDGVNWGRIVAFFSFGG. A BH2 motif is present at residues 180 to 195; the sequence is PWIQENGGWDTFVDLY. The helical transmembrane segment at 210–226 threads the bilayer; the sequence is FNRWFLTGMTVAGVVLL.

Belongs to the Bcl-2 family. Homodimer. Interacts with BCL2L11. Interacts with BAD. Interacts with PGAM5. Interacts with HEBP2. Interacts with p53/TP53 and BBC3; interaction with BBC3 disrupts the interaction with p53/TP53. Interacts with ATP5F1A and ATP5F1B; the interactions mediate the association of isoform Bcl-X(L) with the mitochondrial membrane ATP synthase F(1)F(0) ATP synthase. Interacts with VDAC1. Interacts with BCL2L11 (via BH3). Interacts with RNF183. Interacts with GIMAP3/IAN4 and GIMAP5/IAN5. Interacts with GIMAP5 and HSPA8/HSC70; the interaction between HSPA8 and BCL2L1 is impaired in the absence of GIMAP5. Interacts with isoform 4 of CLU; this interaction releases and activates BAX and promotes cell death. As to quaternary structure, forms heterodimers with BAX, BAK or BCL2; heterodimerization with BAX does not seem to be required for anti-apoptotic activity. Interacts with isoform 1 of SIVA1; the interaction inhibits the anti-apoptotic activity. Interacts with IKZF3. Interacts with RTL10/BOP. Interacts with DNM1L and CLTA; DNM1L and BCL2L1 isoform BCL-X(L) may form a complex in synaptic vesicles that also contains clathrin and MFF. Interacts (via the loop between motifs BH4 and BH3) with NLRP1 (via LRR repeats), but not with NLRP2, NLRP3, NLRP4, PYCARD, nor MEFV. Interacts with BECN1. Post-translationally, proteolytically cleaved by caspases during apoptosis. The cleaved protein, lacking the BH4 motif, has pro-apoptotic activity. Phosphorylated on Ser-62 by CDK1. This phosphorylation is partial in normal mitotic cells, but complete in G2-arrested cells upon DNA-damage, thus promoting subsequent apoptosis probably by triggering caspases-mediated proteolysis. Phosphorylated by PLK3, leading to regulate the G2 checkpoint and progression to cytokinesis during mitosis. Phosphorylation at Ser-49 appears during the S phase and G2, disappears rapidly in early mitosis during prometaphase, metaphase and early anaphase, and re-appears during telophase and cytokinesis. In terms of processing, ubiquitinated by RNF183 during prolonged ER stress, leading to degradation by the proteosome. As to expression, expressed in most tissues. Bcl-X(beta) is specifically expressed in cerebellum, heart, and thymus. In the ovary, the predominant form is Bcl-X(L), with a small but detectable level of Bcl-X(S).

It is found in the mitochondrion inner membrane. The protein localises to the mitochondrion outer membrane. The protein resides in the mitochondrion matrix. Its subcellular location is the cytoplasmic vesicle. It localises to the secretory vesicle. It is found in the synaptic vesicle membrane. The protein localises to the cytoplasm. The protein resides in the cytosol. Its subcellular location is the cytoskeleton. It localises to the microtubule organizing center. It is found in the centrosome. The protein localises to the nucleus membrane. Functionally, potent inhibitor of cell death. Inhibits activation of caspases. Appears to regulate cell death by blocking the voltage-dependent anion channel (VDAC) by binding to it and preventing the release of the caspase activator, CYC1, from the mitochondrial membrane. Also acts as a regulator of G2 checkpoint and progression to cytokinesis during mitosis. Isoform Bcl-X(L) also regulates presynaptic plasticity, including neurotransmitter release and recovery, number of axonal mitochondria as well as size and number of synaptic vesicle clusters. During synaptic stimulation, increases ATP availability from mitochondria through regulation of mitochondrial membrane ATP synthase F(1)F(0) activity and regulates endocytic vesicle retrieval in hippocampal neurons through association with DMN1L and stimulation of its GTPase activity in synaptic vesicles. May attenuate inflammation impairing NLRP1-inflammasome activation, hence CASP1 activation and IL1B release. Its function is as follows. Isoform Bcl-X(S) promotes apoptosis. The polypeptide is Bcl-2-like protein 1 (Bcl2l1) (Rattus norvegicus (Rat)).